We begin with the raw amino-acid sequence, 163 residues long: Nucleotide-binding protein BcerKBAB4_1061 (163 aa).

It belongs to the YajQ family.

Its function is as follows. Nucleotide-binding protein. This Bacillus mycoides (strain KBAB4) (Bacillus weihenstephanensis) protein is Nucleotide-binding protein BcerKBAB4_1061.